A 142-amino-acid chain; its full sequence is MGNANIDESDLKILEILKKNARTPYTLIAKELKVSEAAIRKRIEKLIRQGIIKRFTIEYELENEIRAIVMVQSTPQIPTPEISKKIAKIPGVEVVYETTGDYDILVIVRGTNITSINRTIDEIRSIQGVVGTNSTIILRTWF.

In terms of domain architecture, HTH asnC-type spans 6 to 69 (IDESDLKILE…ELENEIRAIV (64 aa)). Positions 25 to 44 (YTLIAKELKVSEAAIRKRIE) form a DNA-binding region, H-T-H motif.

Homotetramer.

Its subcellular location is the cytoplasm. Its pathway is amino-acid biosynthesis; L-lysine biosynthesis via AAA pathway [regulation]. In the absence or at low concentrations of lysine, activates the biosynthesis of this amino acid via the alpha-aminoadipate (AAA) pathway. The chain is HTH-type transcriptional regulator LysM (lysM) from Saccharolobus solfataricus (strain ATCC 35092 / DSM 1617 / JCM 11322 / P2) (Sulfolobus solfataricus).